An 86-amino-acid chain; its full sequence is Small ribosomal subunit protein bS16 (86 aa).

Belongs to the bacterial ribosomal protein bS16 family.

The chain is Small ribosomal subunit protein bS16 from Stenotrophomonas maltophilia (strain K279a).